A 170-amino-acid chain; its full sequence is Large ribosomal subunit protein uL10 (170 aa).

The protein belongs to the universal ribosomal protein uL10 family. As to quaternary structure, part of the ribosomal stalk of the 50S ribosomal subunit. The N-terminus interacts with L11 and the large rRNA to form the base of the stalk. The C-terminus forms an elongated spine to which L12 dimers bind in a sequential fashion forming a multimeric L10(L12)X complex.

Functionally, forms part of the ribosomal stalk, playing a central role in the interaction of the ribosome with GTP-bound translation factors. The protein is Large ribosomal subunit protein uL10 of Lactobacillus helveticus (strain DPC 4571).